The primary structure comprises 386 residues: Homogentisate solanesyltransferase, chloroplastic (386 aa).

The N-terminal 69 residues, 1–69 (MELSISQSPR…STNYRKISIR (69 aa)), are a transit peptide targeting the chloroplast. Transmembrane regions (helical) follow at residues 130-150 (VLKALSGLLALICGNGYIVGI), 181-201 (LVIFFAIAGLLVVGFNFGPFI), 204-220 (LYSLGLFLGTIYSVPPL), 225-245 (FPVAAFLIIATVRGFLLNFGV), 259-279 (WSAPVAFITSFVTLFALVIAI), 306-326 (IAFLGSGLLLVNYVSAISLAF), 335-355 (SLMIPAHVILASGLIFQTWVL), and 365-385 (ISGYYRFIWNLFYAEYLLFPF).

Belongs to the UbiA prenyltransferase family.

The protein localises to the plastid. It localises to the chloroplast membrane. It catalyses the reaction all-trans-nonaprenyl diphosphate + homogentisate + H(+) = 2-methyl-6-(all-trans-nonaprenyl)benzene-1,4-diol + CO2 + diphosphate. Inhibited by haloxydine (3,5-dichloro-2,6-difluoro-4-haloxypyridine). Its function is as follows. Involved in the synthesis of plastoquinone-9. Can use both homogentisic acid and 2,5-dihydroxyphenylacetic acid gamma-lactone as prenyl acceptors, and solanesyl diphosphate &gt; farnesyl diphosphate &gt; geranylgeranyl diphosphate &gt;&gt; phytyl diphosphate as prenyl donors. Do not catalyze the decardoxylation of homogentisate uncoupled from prenylation. This chain is Homogentisate solanesyltransferase, chloroplastic (HST), found in Arabidopsis thaliana (Mouse-ear cress).